A 304-amino-acid chain; its full sequence is Phosphate transport system permease protein PstA 1 (304 aa).

A run of 6 helical transmembrane segments spans residues 36–56, 96–116, 132–152, 155–175, 204–224, and 276–296; these read FFFT…WVVI, AGVA…YLVE, VLAG…WIAT, FQQS…PVVV, IVRI…LLSI, and WGAA…AAMI. In terms of domain architecture, ABC transmembrane type-1 spans 89 to 297; sequence LYGTLVQAGV…TINLAAAMIR (209 aa).

The protein belongs to the binding-protein-dependent transport system permease family. CysTW subfamily.

It is found in the cell membrane. Functionally, part of the binding-protein-dependent transport system for phosphate; probably responsible for the translocation of the substrate across the membrane. The chain is Phosphate transport system permease protein PstA 1 (pstA1) from Mycobacterium tuberculosis (strain CDC 1551 / Oshkosh).